A 355-amino-acid polypeptide reads, in one-letter code: Methylthioribose-1-phosphate isomerase (355 aa).

Substrate-binding positions include R47–A49, R90, and Q197. Catalysis depends on D238, which acts as the Proton donor. Substrate is bound at residue N248–K249.

Belongs to the eIF-2B alpha/beta/delta subunits family. MtnA subfamily.

It catalyses the reaction 5-(methylsulfanyl)-alpha-D-ribose 1-phosphate = 5-(methylsulfanyl)-D-ribulose 1-phosphate. It participates in amino-acid biosynthesis; L-methionine biosynthesis via salvage pathway; L-methionine from S-methyl-5-thio-alpha-D-ribose 1-phosphate: step 1/6. Functionally, catalyzes the interconversion of methylthioribose-1-phosphate (MTR-1-P) into methylthioribulose-1-phosphate (MTRu-1-P). The sequence is that of Methylthioribose-1-phosphate isomerase from Herpetosiphon aurantiacus (strain ATCC 23779 / DSM 785 / 114-95).